A 645-amino-acid chain; its full sequence is Threonine--tRNA ligase (645 aa).

The region spanning 1-63 is the TGS domain; that stretch reads MDQIKIKFPD…ESDGDIEIVT (63 aa). The interval 242–540 is catalytic; it reads DHRKIGKELE…LTEETKGAFP (299 aa). C336, H387, and H517 together coordinate Zn(2+).

This sequence belongs to the class-II aminoacyl-tRNA synthetase family. Homodimer. Requires Zn(2+) as cofactor.

The protein localises to the cytoplasm. The catalysed reaction is tRNA(Thr) + L-threonine + ATP = L-threonyl-tRNA(Thr) + AMP + diphosphate + H(+). In terms of biological role, catalyzes the attachment of threonine to tRNA(Thr) in a two-step reaction: L-threonine is first activated by ATP to form Thr-AMP and then transferred to the acceptor end of tRNA(Thr). Also edits incorrectly charged L-seryl-tRNA(Thr). This Staphylococcus saprophyticus subsp. saprophyticus (strain ATCC 15305 / DSM 20229 / NCIMB 8711 / NCTC 7292 / S-41) protein is Threonine--tRNA ligase.